The chain runs to 360 residues: Cyclin-D1-binding protein 1 (360 aa).

N-acetylalanine is present on Ala-2. Interaction with TCF3 regions lie at residues Ala-2 to Val-184 and Ile-150 to Leu-360. Interaction with RPLP0 stretches follow at residues Ala-2–Glu-190 and Leu-240–Leu-360. Residues Ala-2–Thr-208 are required for interaction with CCND1.

It belongs to the CCNDBP1 family. Interacts with CCND1 and GRAP2. May also interact with COPS5, RPLP0, SIRT6, SYF2 and TCF3. Phosphorylated. In terms of tissue distribution, ubiquitously expressed. Expression is down-regulated in a variety of tumor types including breast, colon, prostate and rectal tumors, and is up-regulated in certain hepatic carcinomas.

It is found in the cytoplasm. It localises to the nucleus. Functionally, may negatively regulate cell cycle progression. May act at least in part via inhibition of the cyclin-D1/CDK4 complex, thereby preventing phosphorylation of RB1 and blocking E2F-dependent transcription. The sequence is that of Cyclin-D1-binding protein 1 (CCNDBP1) from Homo sapiens (Human).